A 133-amino-acid polypeptide reads, in one-letter code: Large-conductance mechanosensitive channel (133 aa).

2 helical membrane passes run 14–34 and 67–87; these read VIDL…VSSL and GNFI…FMFV.

Belongs to the MscL family. Homopentamer.

The protein resides in the cell membrane. Its function is as follows. Channel that opens in response to stretch forces in the membrane lipid bilayer. May participate in the regulation of osmotic pressure changes within the cell. The polypeptide is Large-conductance mechanosensitive channel (Bacillus mycoides (strain KBAB4) (Bacillus weihenstephanensis)).